The primary structure comprises 89 residues: Small ribosomal subunit protein uS15 (89 aa).

Residues 1–21 show a composition bias toward basic and acidic residues; sequence MALTTEEKKQVLSEYGLHETD. The segment at 1 to 24 is disordered; the sequence is MALTTEEKKQVLSEYGLHETDTGS.

The protein belongs to the universal ribosomal protein uS15 family. Part of the 30S ribosomal subunit. Forms a bridge to the 50S subunit in the 70S ribosome, contacting the 23S rRNA.

Functionally, one of the primary rRNA binding proteins, it binds directly to 16S rRNA where it helps nucleate assembly of the platform of the 30S subunit by binding and bridging several RNA helices of the 16S rRNA. Forms an intersubunit bridge (bridge B4) with the 23S rRNA of the 50S subunit in the ribosome. This is Small ribosomal subunit protein uS15 from Rhodococcus jostii (strain RHA1).